Here is a 62-residue protein sequence, read N- to C-terminus: Protein UL148D (62 aa).

The chain crosses the membrane as a helical span at residues tryptophan 30–phenylalanine 50.

Its subcellular location is the host membrane. This is Protein UL148D (UL148D) from Human cytomegalovirus (strain Merlin) (HHV-5).